The sequence spans 420 residues: Fasciclin-like arabinogalactan protein 4 (420 aa).

Positions 1-28 are cleaved as a signal peptide; sequence MANVISISHFTLLALPYLLLLLSSTAAA. FAS1 domains follow at residues 29 to 177 and 205 to 351; these read INVT…DSLI and GINL…SKVL. N-linked (GlcNAc...) asparagine glycosylation is found at Asn-30, Asn-40, Asn-135, Asn-154, Asn-167, Asn-207, Asn-312, and Asn-317. Residues 360–388 are disordered; that stretch reads SGQPVATAPPQEISLSPESSSEQPSRLVS. Residues 368 to 384 show a composition bias toward low complexity; it reads PPQEISLSPESSSEQPS. Ser-396 is lipidated: GPI-anchor amidated serine. Residues 397 to 420 constitute a propeptide, removed in mature form; that stretch reads GAVKRPLGFLVLWCWCIAFCYVLV.

Belongs to the fasciclin-like AGP family. Expressed in all plant organs and tissues, including guard cells in the leaf.

It localises to the cell membrane. Functionally, may be a cell surface adhesion protein that is required for normal cell expansion. The protein is Fasciclin-like arabinogalactan protein 4 (FLA4) of Arabidopsis thaliana (Mouse-ear cress).